The following is a 336-amino-acid chain: Fructose-1,6-bisphosphatase class 2 (336 aa).

Mn(2+) contacts are provided by aspartate 33, glutamate 57, aspartate 85, and glutamate 88. Residues glutamate 88–threonine 90, tyrosine 119, lysine 164–arginine 166, aspartate 186–aspartate 188, and glycine 210 contribute to the substrate site. Glutamate 213 lines the Mn(2+) pocket.

This sequence belongs to the FBPase class 2 family. In terms of assembly, homodimer. The cofactor is Mn(2+).

It localises to the cytoplasm. The catalysed reaction is beta-D-fructose 1,6-bisphosphate + H2O = beta-D-fructose 6-phosphate + phosphate. It functions in the pathway carbohydrate biosynthesis; gluconeogenesis. Catalyzes the hydrolysis of fructose 1,6-bisphosphate to fructose 6-phosphate. In Shigella flexneri, this protein is Fructose-1,6-bisphosphatase class 2 (glpX).